The following is a 273-amino-acid chain: Ribosomal RNA small subunit methyltransferase A (273 aa).

6 residues coordinate S-adenosyl-L-methionine: asparagine 23, isoleucine 25, glycine 50, glutamate 72, aspartate 97, and asparagine 116.

This sequence belongs to the class I-like SAM-binding methyltransferase superfamily. rRNA adenine N(6)-methyltransferase family. RsmA subfamily.

Its subcellular location is the cytoplasm. The catalysed reaction is adenosine(1518)/adenosine(1519) in 16S rRNA + 4 S-adenosyl-L-methionine = N(6)-dimethyladenosine(1518)/N(6)-dimethyladenosine(1519) in 16S rRNA + 4 S-adenosyl-L-homocysteine + 4 H(+). Specifically dimethylates two adjacent adenosines (A1518 and A1519) in the loop of a conserved hairpin near the 3'-end of 16S rRNA in the 30S particle. May play a critical role in biogenesis of 30S subunits. The protein is Ribosomal RNA small subunit methyltransferase A of Rickettsia akari (strain Hartford).